Reading from the N-terminus, the 606-residue chain is Leucine-rich repeat and immunoglobulin-like domain-containing nogo receptor-interacting protein 2 (606 aa).

An N-terminal signal peptide occupies residues M1–G27. In terms of domain architecture, LRRNT spans C28–I57. Topologically, residues C28–T545 are extracellular. N38 carries N-linked (GlcNAc...) asparagine glycosylation. 12 LRR repeats span residues E58–S79, L82–N103, N106–G127, N130–D151, N154–G175, S178–H199, S202–R223, H226–Y247, N250–H271, Y274–D295, R298–G319, and F322–S343. N130 is a glycosylation site (N-linked (GlcNAc...) asparagine). N188 carries N-linked (GlcNAc...) asparagine glycosylation. Residues N250, N260, and N279 are each glycosylated (N-linked (GlcNAc...) asparagine). Residue N327 is glycosylated (N-linked (GlcNAc...) asparagine). The LRRCT domain occupies N355 to K409. Residues C432 and C483 are joined by a disulfide bond. N-linked (GlcNAc...) asparagine glycans are attached at residues N491, N522, and N527. A helical membrane pass occupies residues A546 to W566. At S567–I606 the chain is on the cytoplasmic side.

It localises to the membrane. The chain is Leucine-rich repeat and immunoglobulin-like domain-containing nogo receptor-interacting protein 2 (Lingo2) from Mus musculus (Mouse).